The primary structure comprises 98 residues: Plastocyanin (98 aa).

The Plastocyanin-like domain occupies 1-98 (DVTVKLGADS…AGMKGTITVQ (98 aa)). 4 residues coordinate Cu cation: histidine 38, cysteine 83, histidine 86, and methionine 91.

Belongs to the plastocyanin family. Cu(2+) serves as cofactor.

It is found in the plastid. It localises to the chloroplast thylakoid membrane. In terms of biological role, participates in electron transfer between P700 and the cytochrome b6-f complex in photosystem I. The polypeptide is Plastocyanin (petE) (Scenedesmus fuscus (Green alga)).